The primary structure comprises 119 residues: Holo-[acyl-carrier-protein] synthase (119 aa).

Aspartate 8 and glutamate 50 together coordinate Mg(2+).

Belongs to the P-Pant transferase superfamily. AcpS family. Mg(2+) serves as cofactor.

It localises to the cytoplasm. The catalysed reaction is apo-[ACP] + CoA = holo-[ACP] + adenosine 3',5'-bisphosphate + H(+). Its function is as follows. Transfers the 4'-phosphopantetheine moiety from coenzyme A to a Ser of acyl-carrier-protein. The protein is Holo-[acyl-carrier-protein] synthase of Clavibacter michiganensis subsp. michiganensis (strain NCPPB 382).